A 309-amino-acid chain; its full sequence is Tagatose-6-phosphate kinase (309 aa).

The protein belongs to the carbohydrate kinase PfkB family. LacC subfamily.

The catalysed reaction is D-tagatofuranose 6-phosphate + ATP = D-tagatofuranose 1,6-bisphosphate + ADP + H(+). The protein operates within carbohydrate metabolism; D-tagatose 6-phosphate degradation; D-glyceraldehyde 3-phosphate and glycerone phosphate from D-tagatose 6-phosphate: step 1/2. The chain is Tagatose-6-phosphate kinase from Streptococcus pneumoniae (strain 70585).